Here is a 377-residue protein sequence, read N- to C-terminus: Nucleosome assembly protein 1;2 (377 aa).

The stretch at 26–80 (VNVLKNKLHDLTGKHSNVTESLSPNVRKRVEALREIQTEHDELEAKFFEERAALE) forms a coiled coil. Residues 47–62 (LSPNVRKRVEALREIQ) carry the Nuclear export signal motif. Residues 223–228 (KKKPKK) carry the Nuclear localization signal motif. Positions 298–377 (EAAEDDYAEL…GERPPECKQQ (80 aa)) are disordered. Positions 299 to 342 (AAEDDYAELEDDEDEDDDEEDDEDEDEEEEDEEDDEDEEEDEDE) are enriched in acidic residues. Cys-374 carries the post-translational modification Cysteine methyl ester. A lipid anchor (S-farnesyl cysteine) is attached at Cys-374. The propeptide at 375–377 (KQQ) is removed in mature form.

It belongs to the nucleosome assembly protein (NAP) family. In terms of assembly, binds preferentially histone H1 in vitro. Interacts with CYCB1;1.

Its subcellular location is the nucleus. It localises to the cytoplasm. Its function is as follows. May modulate chromatin structure by regulation of nucleosome assembly/disassembly. Could function together with B-type cyclins in the regulation of microtubule dynamics. This is Nucleosome assembly protein 1;2 (NAP1;2) from Nicotiana tabacum (Common tobacco).